Reading from the N-terminus, the 304-residue chain is D-tagatose-1-phosphate kinase (304 aa).

Residue aspartate 250 is the Proton acceptor of the active site.

The protein belongs to the carbohydrate kinase PfkB family. Mg(2+) is required as a cofactor.

The enzyme catalyses alpha-D-tagatopyranose 1-phosphate + ATP = D-tagatofuranose 1,6-bisphosphate + ADP + H(+). The protein operates within carbohydrate degradation. Its activity is regulated as follows. Activity is inhibited by tagatose-6-phosphate and fructose-6-phosphate. In terms of biological role, kinase involved in a D-tagatose catabolic pathway. Catalyzes the phosphorylation of D-tagatose-1-phosphate (Tag-1P) to D-tagatose-1,6-bisphosphate. Can also use D-fructose-1-phosphate, with 40-fold lower catalytic efficiency, but not tagatose-6-phosphate or fructose-6-phosphate. The substrate, which occurs in a pyranose form in solution, may undergo a change to the furanose conformation after binding to the enzyme, in order to permit phosphorylation at C-6. The protein is D-tagatose-1-phosphate kinase of Bacillus licheniformis (strain ATCC 14580 / DSM 13 / JCM 2505 / CCUG 7422 / NBRC 12200 / NCIMB 9375 / NCTC 10341 / NRRL NRS-1264 / Gibson 46).